The sequence spans 314 residues: Homoserine O-acetyltransferase (314 aa).

C142 acts as the Acyl-thioester intermediate in catalysis. 2 residues coordinate substrate: K163 and S192. H235 functions as the Proton acceptor in the catalytic mechanism. Residue E237 is part of the active site. Residue R249 coordinates substrate.

This sequence belongs to the MetA family.

The protein localises to the cytoplasm. It carries out the reaction L-homoserine + acetyl-CoA = O-acetyl-L-homoserine + CoA. It functions in the pathway amino-acid biosynthesis; L-methionine biosynthesis via de novo pathway; O-acetyl-L-homoserine from L-homoserine: step 1/1. Transfers an acetyl group from acetyl-CoA to L-homoserine, forming acetyl-L-homoserine. The sequence is that of Homoserine O-acetyltransferase from Streptococcus pneumoniae serotype 4 (strain ATCC BAA-334 / TIGR4).